The primary structure comprises 80 residues: uncharacterized protein (80 aa).

An N-terminal signal peptide occupies residues 1–15 (MVKLSFTLRFGDVWV).

This is an uncharacterized protein from Archaeoglobus fulgidus (strain ATCC 49558 / DSM 4304 / JCM 9628 / NBRC 100126 / VC-16).